The following is a 657-amino-acid chain: Glycogen debranching enzyme (657 aa).

Asp336 (nucleophile) is an active-site residue. Residue Glu371 is the Proton donor of the active site. A compositionally biased stretch (basic and acidic residues) spans 458-467; sequence NEANGEENRD. The segment at 458–479 is disordered; the sequence is NEANGEENRDGTNNNYSNNHGK.

This sequence belongs to the glycosyl hydrolase 13 family.

The enzyme catalyses Hydrolysis of (1-&gt;6)-alpha-D-glucosidic linkages to branches with degrees of polymerization of three or four glucose residues in limit dextrin.. The protein operates within glycan degradation; glycogen degradation. Removes maltotriose and maltotetraose chains that are attached by 1,6-alpha-linkage to the limit dextrin main chain, generating a debranched limit dextrin. The sequence is that of Glycogen debranching enzyme from Shigella boydii serotype 18 (strain CDC 3083-94 / BS512).